The chain runs to 217 residues: Putative thymidylate synthase (217 aa).

The active site involves cysteine 139.

This sequence belongs to the thymidylate synthase family. Archaeal-type ThyA subfamily. Monomer.

The protein resides in the cytoplasm. Its pathway is pyrimidine metabolism; dTTP biosynthesis. Functionally, may catalyze the biosynthesis of dTMP using an unknown cosubstrate. The polypeptide is Putative thymidylate synthase (Methanococcoides burtonii (strain DSM 6242 / NBRC 107633 / OCM 468 / ACE-M)).